The following is a 65-amino-acid chain: Small ribosomal subunit protein eS27 (65 aa).

Zn(2+) is bound by residues C20, C23, C39, and C42. Residues 20–42 (CIDCGNEQIVFSHPATKVRCLVC) form a C4-type zinc finger.

The protein belongs to the eukaryotic ribosomal protein eS27 family. As to quaternary structure, part of the 30S ribosomal subunit. Zn(2+) serves as cofactor.

In Thermococcus gammatolerans (strain DSM 15229 / JCM 11827 / EJ3), this protein is Small ribosomal subunit protein eS27.